The following is a 367-amino-acid chain: Uptake hydrogenase small subunit (367 aa).

Residues 1–45 (MTPTETFYEVMRRQGVTRRSFLKFCSLTATALGLGPAYTSEIAHA) constitute a signal peptide (tat-type signal). Cys-62, Cys-65, Cys-160, Cys-194, His-232, Cys-235, Cys-260, and Cys-266 together coordinate [4Fe-4S] cluster. 3 residues coordinate [3Fe-4S] cluster: Cys-275, Cys-294, and Cys-297.

The protein belongs to the [NiFe]/[NiFeSe] hydrogenase small subunit family. In terms of assembly, heterodimer of a large and a small subunit. [4Fe-4S] cluster serves as cofactor. The cofactor is [3Fe-4S] cluster. Predicted to be exported by the Tat system. The position of the signal peptide cleavage has been experimentally proven.

The protein resides in the cell membrane. It carries out the reaction H2 + A = AH2. Functionally, this enzyme recycles the H(2) produced by nitrogenase to increase the production of ATP and to protect nitrogenase against inhibition or damage by O(2) under carbon- or phosphate-limited conditions. The protein is Uptake hydrogenase small subunit (hoxS) of Afipia carboxidovorans (strain ATCC 49405 / DSM 1227 / KCTC 32145 / OM5) (Oligotropha carboxidovorans).